Here is a 179-residue protein sequence, read N- to C-terminus: MASTDPMTRRFAVACGVLSQYVKANSSQPSTAAPVAQGVSGLMAAAAAAAAAPVVQEPGCEVDGGGQQFTIFYAGKVVVIDRCTPAMAAELMRFASAAQGGGGAPEAPPALVDMPIARKASLKRFLAKRKATPASARSSYVVRAAAAEEEQPPAKKAKAAVERREDWLALGSLGHMHSR.

A Tify domain is found at V62–A97. A Jas motif is present at residues P115 to Y140. The Nuclear localization signal motif lies at A117–R124.

The protein belongs to the TIFY/JAZ family. In terms of assembly, interacts with BHLH148. Interacts with COI1A in a coronatine-dependent manner. Interacts with COI1B in a coronatine-dependent manner. Coronatine is an analog of jasmonoyl isoleucine (JA-Ile). Interacts with RSS3. Forms a ternary complex with RSS3 and BHLH094 in the nucleus. Interacts with BHLH062 and NINJA1. Interacts with MYB30. In terms of processing, ubiquitinated. Targeted for degradation by the SCF(COI1) E3 ubiquitin ligase-proteasome pathway during jasmonate signaling.

Its subcellular location is the nucleus. Its function is as follows. Repressor of jasmonate (JA) responses. Forms a ternary complex with RSS3 and BHLH94 to negatively regulate JA-responsive genes. Acts as a positive regulator of tolerance to salt stress. Involved in salt tolerance by modulating potassium homeostasis through JA signaling and regulation of the expression of potassium ion transporter genes. Acts as a transcriptional regulator targeted by the SCF(COI1) E3 ubiquitin ligase complexes in the JA signaling pathway, and interacts with BHLH062 that may directly regulate the ion transporter genes. Acts as a positive regulator of tolerance to dehydration stress. Acts as a negative regulator of tolerance to cold stress by interacting with MYB30. This chain is Protein TIFY 11a, found in Oryza sativa subsp. japonica (Rice).